The following is a 177-amino-acid chain: TRAF-interacting protein with FHA domain-containing protein A (177 aa).

The FHA domain occupies 48-104; it reads VAFGRDYNVCRYPLLSNRVSRIQFNLQFFKHFNCSTTAIEIKNLSKKNKLYVDNLEL.

It belongs to the TIFA family. Interacts with traf6.

The protein resides in the cytoplasm. In terms of biological role, adapter molecule that plays a key role in the activation of pro-inflammatory NF-kappa-B signaling following detection of bacterial pathogen-associated molecular pattern metabolites (PAMPs). Promotes activation of an innate immune response by inducing the oligomerization and polyubiquitination of TRAF6, which leads to the activation of TAK1 and IKK through a proteasome-independent mechanism. This Xenopus tropicalis (Western clawed frog) protein is TRAF-interacting protein with FHA domain-containing protein A.